Here is a 262-residue protein sequence, read N- to C-terminus: GTP cyclohydrolase 1 type 2 homolog (262 aa).

His65, Asp102, His222, and Glu225 together coordinate a divalent metal cation.

Belongs to the GTP cyclohydrolase I type 2/NIF3 family. Homohexamer.

The sequence is that of GTP cyclohydrolase 1 type 2 homolog from Streptococcus pyogenes serotype M3 (strain ATCC BAA-595 / MGAS315).